A 274-amino-acid chain; its full sequence is NH(3)-dependent NAD(+) synthetase (274 aa).

Residue 46–53 coordinates ATP; it reads GISGGQDS. Asp52 serves as a coordination point for Mg(2+). Arg140 serves as a coordination point for deamido-NAD(+). An ATP-binding site is contributed by Thr160. Residue Glu165 participates in Mg(2+) binding. 2 residues coordinate deamido-NAD(+): Lys173 and Asp180. ATP contacts are provided by Lys189 and Thr211. 260–261 is a binding site for deamido-NAD(+); sequence HK.

This sequence belongs to the NAD synthetase family. As to quaternary structure, homodimer.

It carries out the reaction deamido-NAD(+) + NH4(+) + ATP = AMP + diphosphate + NAD(+) + H(+). The protein operates within cofactor biosynthesis; NAD(+) biosynthesis; NAD(+) from deamido-NAD(+) (ammonia route): step 1/1. Catalyzes the ATP-dependent amidation of deamido-NAD to form NAD. Uses ammonia as a nitrogen source. The protein is NH(3)-dependent NAD(+) synthetase of Streptococcus pneumoniae serotype 19F (strain G54).